The chain runs to 729 residues: Isocitrate dehydrogenase [NADP] (729 aa).

Residues Asn-83 and Ser-85 each coordinate NADP(+). Residues Ser-121, Asn-124, Arg-128, Arg-134, and Lys-244 each coordinate D-threo-isocitrate. Asn-124 contacts NADP(+). Asp-337 provides a ligand contact to Mg(2+). Tyr-407 and Arg-534 together coordinate D-threo-isocitrate. 2 residues coordinate Mg(2+): Asp-535 and Asp-539. The NADP(+) site is built by Ser-572, His-576, Arg-587, Asp-589, and Arg-636.

This sequence belongs to the monomeric-type IDH family. In terms of assembly, monomer. The cofactor is Mg(2+). Requires Mn(2+) as cofactor.

It catalyses the reaction D-threo-isocitrate + NADP(+) = 2-oxoglutarate + CO2 + NADPH. Functionally, catalyzes the oxidative decarboxylation of isocitrate to 2-oxoglutarate and carbon dioxide with the concomitant reduction of NADP(+). The protein is Isocitrate dehydrogenase [NADP] of Corynebacterium efficiens (strain DSM 44549 / YS-314 / AJ 12310 / JCM 11189 / NBRC 100395).